A 79-amino-acid chain; its full sequence is UPF0291 protein SAV1341 (79 aa).

Residues 56 to 79 (IDPEGNDVTPEKIKEIQQKRDNKN) are disordered. Positions 64 to 79 (TPEKIKEIQQKRDNKN) are enriched in basic and acidic residues.

The protein belongs to the UPF0291 family.

The protein resides in the cytoplasm. This Staphylococcus aureus (strain Mu50 / ATCC 700699) protein is UPF0291 protein SAV1341.